The primary structure comprises 334 residues: Leukocyte cell-derived chemotaxin 1 (334 aa).

The helical transmembrane segment at 45–65 threads the bilayer; it reads VVLISGAVLLLFGAIGAFYFW. Positions 104-201 constitute a BRICHOS domain; sequence GSGAEEAIAV…LCGDLPIFWL (98 aa). The cysteines at positions 131 and 193 are disulfide-linked. The propeptide occupies 211 to 214; it reads RERR. The tract at residues 218–268 is disordered; it reads RKIVPTTTKRPHSGPRSNPGAGRLNNETRPSVQEDSQAFNPDNPYHQQEGE. Polar residues predominate over residues 242–257; the sequence is NNETRPSVQEDSQAFN. N243 carries N-linked (GlcNAc...) asparagine glycosylation. Cystine bridges form between C282–C286, C283–C323, C293–C317, and C297–C313.

The protein belongs to the chondromodulin-1 family. Post-translationally, after cleavage, the post-translationally modified ChM-I is secreted as a glycoprotein. Detected in cartilage and cardiac valves (at protein level). Detected in the laminae fibrosa, spongiosa and ventricularis layers of normal cardiac valves (at protein level). Expression is decreased cardiac valves of patients with valvular heart disease (at protein level). Weakly expressed in chondrosarcoma.

The protein localises to the secreted. The protein resides in the extracellular space. It localises to the extracellular matrix. Its subcellular location is the endomembrane system. Its function is as follows. Bifunctional growth regulator that stimulates the growth of cultured chondrocytes in the presence of basic fibroblast growth factor (FGF) but inhibits the growth of cultured vascular endothelial cells. May contribute to the rapid growth of cartilage and vascular invasion prior to the replacement of cartilage by bone during endochondral bone development. Inhibits in vitro tube formation and mobilization of endothelial cells. Plays a role as antiangiogenic factor in cardiac valves to suppress neovascularization. The polypeptide is Leukocyte cell-derived chemotaxin 1 (Homo sapiens (Human)).